The following is a 591-amino-acid chain: Aspartate--tRNA(Asp/Asn) ligase (591 aa).

Residue Glu174 participates in L-aspartate binding. The tract at residues 198-201 (QLFK) is aspartate. Arg220 lines the L-aspartate pocket. Residues 220 to 222 (RDE) and Gln229 contribute to the ATP site. His450 contributes to the L-aspartate binding site. Position 483 (Glu483) interacts with ATP. Arg490 is an L-aspartate binding site. Residue 535 to 538 (GLDR) participates in ATP binding.

Belongs to the class-II aminoacyl-tRNA synthetase family. Type 1 subfamily. Homodimer.

It localises to the cytoplasm. The enzyme catalyses tRNA(Asx) + L-aspartate + ATP = L-aspartyl-tRNA(Asx) + AMP + diphosphate. Aspartyl-tRNA synthetase with relaxed tRNA specificity since it is able to aspartylate not only its cognate tRNA(Asp) but also tRNA(Asn). Reaction proceeds in two steps: L-aspartate is first activated by ATP to form Asp-AMP and then transferred to the acceptor end of tRNA(Asp/Asn). The sequence is that of Aspartate--tRNA(Asp/Asn) ligase from Pseudomonas aeruginosa (strain LESB58).